A 572-amino-acid chain; its full sequence is MAFGSKILNIGSKSDEYNDDAVPLDQVEEGAQERRYYLGLTKREFKLMMLAGVGFFLDSYDLFIINLVTPIFEYLYWGGIEKGPTGKGHYPSGIRGLVNASANIGNIFGQLLFGFMGDFFGRKFVYGKEMVIVIIATVLVIAMPKSIHSPLSKMMWVFCWRWLLGVGIGGDYPMSAAITSERSKIKRRGTLISLIFAFQGFGTLAGAIVTIILLGCFEHPLNREGHYHKLEGVWRLQFGLALVPAIGVLIPRLIMKESKSYENSKALNSAEGKDPKAFFNTDDEDNMKKSSSHGDSEVVEASDRYANQADAADAEVDNIEKQFAAVTTPENSSGFITYFRQWRHFKHLLGTSVCWFLLDIAFYGVNLNQSVILKNIGFSTGTNEYRTLMKNAIGNLIIAVAGYVPGYWFNVFLVEILGRKWIQLQGFVITGLMFAILAGRWNEISTGGRFACFVIAQLFSNFGPNSTTFIYPAEVFPARVRGTAHGVSAALGKCGAILASLLFNFLTGVIGYGNVMWIFCGCMWGGILFTLLLPETKGRDADEIDRLELFYGKDGKVQCDSKWKSWYFNGIF.

Residues 1–47 (MAFGSKILNIGSKSDEYNDDAVPLDQVEEGAQERRYYLGLTKREFKL) are Cytoplasmic-facing. 2 positions are modified to phosphoserine: Ser12 and Ser14. Residues 48–68 (MMLAGVGFFLDSYDLFIINLV) form a helical membrane-spanning segment. Topologically, residues 69-99 (TPIFEYLYWGGIEKGPTGKGHYPSGIRGLVN) are extracellular. A helical transmembrane segment spans residues 100–120 (ASANIGNIFGQLLFGFMGDFF). The Cytoplasmic segment spans residues 121–123 (GRK). A helical transmembrane segment spans residues 124 to 144 (FVYGKEMVIVIIATVLVIAMP). Over 145–153 (KSIHSPLSK) the chain is Extracellular. Residues 154–174 (MMWVFCWRWLLGVGIGGDYPM) form a helical membrane-spanning segment. Residues 175 to 193 (SAAITSERSKIKRRGTLIS) lie on the Cytoplasmic side of the membrane. A helical transmembrane segment spans residues 194-214 (LIFAFQGFGTLAGAIVTIILL). The Extracellular segment spans residues 215–229 (GCFEHPLNREGHYHK). The chain crosses the membrane as a helical span at residues 230–250 (LEGVWRLQFGLALVPAIGVLI). Topologically, residues 251–346 (PRLIMKESKS…TYFRQWRHFK (96 aa)) are cytoplasmic. The interval 265–297 (KALNSAEGKDPKAFFNTDDEDNMKKSSSHGDSE) is disordered. Basic and acidic residues predominate over residues 286 to 296 (NMKKSSSHGDS). Residues Ser292 and Ser296 each carry the phosphoserine modification. A helical transmembrane segment spans residues 347 to 367 (HLLGTSVCWFLLDIAFYGVNL). Residues 368–395 (NQSVILKNIGFSTGTNEYRTLMKNAIGN) lie on the Extracellular side of the membrane. The chain crosses the membrane as a helical span at residues 396 to 416 (LIIAVAGYVPGYWFNVFLVEI). The Cytoplasmic segment spans residues 417–420 (LGRK). A helical transmembrane segment spans residues 421–441 (WIQLQGFVITGLMFAILAGRW). Residues 442-449 (NEISTGGR) are Extracellular-facing. Residues 450-470 (FACFVIAQLFSNFGPNSTTFI) form a helical membrane-spanning segment. Over 471–485 (YPAEVFPARVRGTAH) the chain is Cytoplasmic. A helical membrane pass occupies residues 486-506 (GVSAALGKCGAILASLLFNFL). At 507 to 508 (TG) the chain is on the extracellular side. The chain crosses the membrane as a helical span at residues 509–529 (VIGYGNVMWIFCGCMWGGILF). Residues 530 to 572 (TLLLPETKGRDADEIDRLELFYGKDGKVQCDSKWKSWYFNGIF) lie on the Cytoplasmic side of the membrane.

The protein belongs to the major facilitator superfamily. Sugar transporter (TC 2.A.1.1) family.

The protein localises to the membrane. Functionally, high-affinity transporter for external inorganic phosphate. The chain is Putative inorganic phosphate transporter C8E4.01c from Schizosaccharomyces pombe (strain 972 / ATCC 24843) (Fission yeast).